The sequence spans 1203 residues: DNA-directed RNA polymerase subunit beta' (1203 aa).

4 residues coordinate Zn(2+): cysteine 60, cysteine 62, cysteine 75, and cysteine 78. Aspartate 449, aspartate 451, and aspartate 453 together coordinate Mg(2+). Cysteine 818, cysteine 892, cysteine 899, and cysteine 902 together coordinate Zn(2+).

It belongs to the RNA polymerase beta' chain family. The RNAP catalytic core consists of 2 alpha, 1 beta, 1 beta' and 1 omega subunit. When a sigma factor is associated with the core the holoenzyme is formed, which can initiate transcription. Mg(2+) serves as cofactor. Requires Zn(2+) as cofactor.

It carries out the reaction RNA(n) + a ribonucleoside 5'-triphosphate = RNA(n+1) + diphosphate. Functionally, DNA-dependent RNA polymerase catalyzes the transcription of DNA into RNA using the four ribonucleoside triphosphates as substrates. This Bacillus mycoides (strain KBAB4) (Bacillus weihenstephanensis) protein is DNA-directed RNA polymerase subunit beta'.